We begin with the raw amino-acid sequence, 172 residues long: Shikimate kinase (172 aa).

Gly11–Thr16 lines the ATP pocket. Ser15 is a Mg(2+) binding site. Positions 33, 57, and 79 each coordinate substrate. An ATP-binding site is contributed by Arg117. Arg136 contributes to the substrate binding site. Arg153 serves as a coordination point for ATP.

This sequence belongs to the shikimate kinase family. As to quaternary structure, monomer. The cofactor is Mg(2+).

It is found in the cytoplasm. The catalysed reaction is shikimate + ATP = 3-phosphoshikimate + ADP + H(+). The protein operates within metabolic intermediate biosynthesis; chorismate biosynthesis; chorismate from D-erythrose 4-phosphate and phosphoenolpyruvate: step 5/7. In terms of biological role, catalyzes the specific phosphorylation of the 3-hydroxyl group of shikimic acid using ATP as a cosubstrate. This chain is Shikimate kinase, found in Pseudomonas fluorescens (strain Pf0-1).